We begin with the raw amino-acid sequence, 742 residues long: Phosphoribosylformylglycinamidine synthase subunit PurL (742 aa).

Histidine 54 is a catalytic residue. The ATP site is built by tyrosine 57 and lysine 96. Residue glutamate 98 participates in Mg(2+) binding. Residues 99–102 (SHNH) and arginine 121 each bind substrate. Histidine 100 (proton acceptor) is an active-site residue. Aspartate 122 contacts Mg(2+). Glutamine 245 contacts substrate. Residue aspartate 273 participates in Mg(2+) binding. Substrate is bound at residue 317–319 (ESQ). ATP-binding residues include aspartate 500 and glycine 537. Asparagine 538 provides a ligand contact to Mg(2+). Position 540 (serine 540) interacts with substrate.

Belongs to the FGAMS family. As to quaternary structure, monomer. Part of the FGAM synthase complex composed of 1 PurL, 1 PurQ and 2 PurS subunits.

It is found in the cytoplasm. The catalysed reaction is N(2)-formyl-N(1)-(5-phospho-beta-D-ribosyl)glycinamide + L-glutamine + ATP + H2O = 2-formamido-N(1)-(5-O-phospho-beta-D-ribosyl)acetamidine + L-glutamate + ADP + phosphate + H(+). Its pathway is purine metabolism; IMP biosynthesis via de novo pathway; 5-amino-1-(5-phospho-D-ribosyl)imidazole from N(2)-formyl-N(1)-(5-phospho-D-ribosyl)glycinamide: step 1/2. Part of the phosphoribosylformylglycinamidine synthase complex involved in the purines biosynthetic pathway. Catalyzes the ATP-dependent conversion of formylglycinamide ribonucleotide (FGAR) and glutamine to yield formylglycinamidine ribonucleotide (FGAM) and glutamate. The FGAM synthase complex is composed of three subunits. PurQ produces an ammonia molecule by converting glutamine to glutamate. PurL transfers the ammonia molecule to FGAR to form FGAM in an ATP-dependent manner. PurS interacts with PurQ and PurL and is thought to assist in the transfer of the ammonia molecule from PurQ to PurL. This is Phosphoribosylformylglycinamidine synthase subunit PurL from Oceanobacillus iheyensis (strain DSM 14371 / CIP 107618 / JCM 11309 / KCTC 3954 / HTE831).